The following is a 380-amino-acid chain: Tryptophan--tRNA ligase (380 aa).

Residues 81-89 (PSLGMHIGH) carry the 'HIGH' region motif. The 'KMSKS' region motif lies at 253-257 (KMSSS).

This sequence belongs to the class-I aminoacyl-tRNA synthetase family.

The protein localises to the cytoplasm. It catalyses the reaction tRNA(Trp) + L-tryptophan + ATP = L-tryptophyl-tRNA(Trp) + AMP + diphosphate + H(+). This Saccharolobus solfataricus (strain ATCC 35092 / DSM 1617 / JCM 11322 / P2) (Sulfolobus solfataricus) protein is Tryptophan--tRNA ligase.